A 735-amino-acid chain; its full sequence is 1,4-alpha-glucan branching enzyme GlgB 1 (735 aa).

Asp-418 serves as the catalytic Nucleophile. The active-site Proton donor is Glu-471.

It belongs to the glycosyl hydrolase 13 family. GlgB subfamily. As to quaternary structure, monomer.

It catalyses the reaction Transfers a segment of a (1-&gt;4)-alpha-D-glucan chain to a primary hydroxy group in a similar glucan chain.. The protein operates within glycan biosynthesis; glycogen biosynthesis. In terms of biological role, catalyzes the formation of the alpha-1,6-glucosidic linkages in glycogen by scission of a 1,4-alpha-linked oligosaccharide from growing alpha-1,4-glucan chains and the subsequent attachment of the oligosaccharide to the alpha-1,6 position. This Rhizobium etli (strain ATCC 51251 / DSM 11541 / JCM 21823 / NBRC 15573 / CFN 42) protein is 1,4-alpha-glucan branching enzyme GlgB 1.